Here is a 249-residue protein sequence, read N- to C-terminus: DNA repair protein RecO (249 aa).

This sequence belongs to the RecO family.

In terms of biological role, involved in DNA repair and RecF pathway recombination. This Polaromonas naphthalenivorans (strain CJ2) protein is DNA repair protein RecO.